The following is a 284-amino-acid chain: Chaperone protein dnaJ 6 (284 aa).

Disordered regions lie at residues 1–30, 196–221, and 252–284; these read MGRKKKSRASTTEEDEIEMDNAGPSSETSL, NKISETKPPTSPLRKRKKKKSAAKDS, and GGDAEAEPTEEEFEAAQRRIESKRKPSKKSRGK. A Nuclear localization signal motif is present at residues 3-6; sequence RKKK. The region spanning 29–94 is the J domain; the sequence is SLYEVLGVER…EKRAVYDQTG (66 aa). The Nuclear localization signal motif lies at 209–215; sequence RKRKKKK. Residues 255 to 265 are compositionally biased toward acidic residues; the sequence is AEAEPTEEEFE. The segment covering 266–275 has biased composition (basic and acidic residues); sequence AAQRRIESKR.

Belongs to the DnaJ family. C/III subfamily. Highly expressed in leaves, flowers and siliques, and to lower extent in roots.

The protein localises to the nucleus. Its function is as follows. Plays a continuous role in plant development probably in the structural organization of compartments. This is Chaperone protein dnaJ 6 (ATJ6) from Arabidopsis thaliana (Mouse-ear cress).